Reading from the N-terminus, the 174-residue chain is Variant surface antigen B (174 aa).

The N-terminal stretch at 1–29 (MKKSIFSKKLLVSFGSLVALASIPLIAIS) is a signal peptide. A lipid anchor (N-palmitoyl cysteine) is attached at Cys30. A lipid anchor (S-diacylglycerol cysteine) is attached at Cys30. The disordered stretch occupies residues 32–174 (QTNTDKSQQP…SQDSGNGSTK (143 aa)). Low complexity predominate over residues 38 to 49 (SQQPGSGSSTSG). Positions 50–75 (GQSGTGLGSGTTTGGQSGTTTGGRSG) are enriched in gly residues. Residues 76-97 (SGSSSSTTGGQTGTGSDSQDSG) show a composition bias toward low complexity. 7 repeat units span residues 88 to 99 (GTGSDSQDSGAK), 100 to 111 (GTGSDSQDSGAK), 112 to 123 (GTGSDSQDSGAK), 124 to 135 (GTGSDSQDSGAK), 136 to 147 (GTGSDSQDSGAK), 148 to 159 (GTGSDSQDSGAK), and 160 to 171 (GTGSDSQDSGNG). The tract at residues 88 to 171 (GTGSDSQDSG…GSDSQDSGNG (84 aa)) is 7 X 12 AA tandem repeats. The segment covering 102–174 (GSDSQDSGAK…SQDSGNGSTK (73 aa)) has biased composition (polar residues).

It is found in the cell membrane. Functionally, responsible for the antigenic diversity for host adaptation. The sequence is that of Variant surface antigen B (vlpB) from Mesomycoplasma hyorhinis (Mycoplasma hyorhinis).